Consider the following 458-residue polypeptide: tRNA modification GTPase MnmE (458 aa).

(6S)-5-formyl-5,6,7,8-tetrahydrofolate is bound by residues arginine 26, glutamate 88, and arginine 127. The region spanning 224 to 378 is the TrmE-type G domain; it reads GLSTAIIGRP…IEERINDIFF (155 aa). Asparagine 234 is a K(+) binding site. GTP is bound by residues 234–239, 253–259, and 278–281; these read NVGKSS, TDIEGTT, and DTAG. Position 238 (serine 238) interacts with Mg(2+). Residues threonine 253, isoleucine 255, and threonine 258 each coordinate K(+). Position 259 (threonine 259) interacts with Mg(2+). Residue lysine 458 participates in (6S)-5-formyl-5,6,7,8-tetrahydrofolate binding.

The protein belongs to the TRAFAC class TrmE-Era-EngA-EngB-Septin-like GTPase superfamily. TrmE GTPase family. Homodimer. Heterotetramer of two MnmE and two MnmG subunits. Requires K(+) as cofactor.

The protein localises to the cytoplasm. In terms of biological role, exhibits a very high intrinsic GTPase hydrolysis rate. Involved in the addition of a carboxymethylaminomethyl (cmnm) group at the wobble position (U34) of certain tRNAs, forming tRNA-cmnm(5)s(2)U34. This chain is tRNA modification GTPase MnmE, found in Streptococcus agalactiae serotype III (strain NEM316).